Reading from the N-terminus, the 275-residue chain is Large ribosomal subunit protein uL2 (275 aa).

Positions 224–275 (AMNPVDHPHGGGEGKAPIGHPGPLTPWGKPALGYKTRKKGKASDKFIIRRRK) are disordered. A compositionally biased stretch (basic and acidic residues) spans 264 to 275 (KASDKFIIRRRK).

This sequence belongs to the universal ribosomal protein uL2 family. In terms of assembly, part of the 50S ribosomal subunit. Forms a bridge to the 30S subunit in the 70S ribosome.

One of the primary rRNA binding proteins. Required for association of the 30S and 50S subunits to form the 70S ribosome, for tRNA binding and peptide bond formation. It has been suggested to have peptidyltransferase activity; this is somewhat controversial. Makes several contacts with the 16S rRNA in the 70S ribosome. This Thermoanaerobacter pseudethanolicus (strain ATCC 33223 / 39E) (Clostridium thermohydrosulfuricum) protein is Large ribosomal subunit protein uL2.